Reading from the N-terminus, the 636-residue chain is Carbon monoxide dehydrogenase 2 (636 aa).

Residues Cys39, Cys47, Cys48, Cys51, Cys56, and Cys70 each coordinate [4Fe-4S] cluster. 6 residues coordinate [Ni-4Fe-5S] cluster: His261, Cys295, Cys333, Cys446, Cys476, and Cys526.

The protein belongs to the Ni-containing carbon monoxide dehydrogenase family. Homodimer. [4Fe-4S] cluster serves as cofactor. [Ni-4Fe-5S] cluster is required as a cofactor.

The protein resides in the cytoplasm. The protein localises to the cell membrane. It carries out the reaction CO + 2 oxidized [2Fe-2S]-[ferredoxin] + H2O = 2 reduced [2Fe-2S]-[ferredoxin] + CO2 + 2 H(+). With respect to regulation, inactivated by O(2). Its function is as follows. CODH oxidizes carbon monoxide coupled, via CooF, to the reduction of a hydrogen cation by a hydrogenase (possibly CooH). The chain is Carbon monoxide dehydrogenase 2 (cooS2) from Carboxydothermus hydrogenoformans (strain ATCC BAA-161 / DSM 6008 / Z-2901).